A 375-amino-acid chain; its full sequence is Venom allergen 5 (375 aa).

Residues 1–26 form the signal peptide; it reads MSAPVGIPSLLLALCALLCVLNAVRS. The region spanning 66–210 is the SCP domain; that stretch reads VRLHNNLRSK…RRYTQIVCNY (145 aa). N-linked (GlcNAc...) asparagine glycosylation is found at Asn-300 and Asn-366.

Belongs to the CRISP family. Venom allergen 5-like subfamily. Contains 9 disulfide bonds. In terms of tissue distribution, expressed by the venom gland.

Its subcellular location is the secreted. This is Venom allergen 5 from Lycosa singoriensis (Wolf spider).